The chain runs to 1671 residues: Kinesin-like protein unc-104 (1671 aa).

Residues 3 to 351 form the Kinesin motor domain; that stretch reads SVKVAVRVRP…LRYADRAKQI (349 aa). 97–104 serves as a coordination point for ATP; the sequence is GQTGAGKS. A coiled-coil region spans residues 358–437; sequence NEDANAKLIR…IAELNETWEE (80 aa). Positions 391-413 are disordered; the sequence is DELNKSTTGIKSPSKSRNRNGST. Over residues 395 to 413 the composition is skewed to polar residues; sequence KSTTGIKSPSKSRNRNGST. In terms of domain architecture, FHA spans 500-566; it reads TRLGTHEANV…LKTGSRVILG (67 aa). A coiled-coil region spans residues 577–674; that stretch reads EQARELREKI…EEQSMTMSMY (98 aa). The disordered stretch occupies residues 949-973; that stretch reads DVDSGRGIDSNSASDCPENAEEPGE. One can recognise a PH domain in the interval 1538–1636; sequence VVARKGLLNV…WLYAINPLLA (99 aa).

The protein belongs to the TRAFAC class myosin-kinesin ATPase superfamily. Kinesin family. Unc-104 subfamily. As to quaternary structure, monomer.

The protein localises to the cytoplasm. It is found in the cytoskeleton. In terms of biological role, required for presynaptic maturation, has a role in axonal transport of dense-core vesicles carrying synaptic vesicle precursors, components required for the morphological transformation of axonal growth cones to mature boutons. This Drosophila pseudoobscura pseudoobscura (Fruit fly) protein is Kinesin-like protein unc-104.